The primary structure comprises 20 residues: Apidaecin 1+ (20 aa).

The disordered stretch occupies residues 1 to 20; that stretch reads GKPNRPRPAPIQPRPPHPRL.

It belongs to the apidaecin family.

The protein localises to the secreted. Antimicrobial peptide active against many Gram-negative enterobacterial and plant-associated bacterial species. Not active against other bacterial species like H.pylori, P.mirabilis, B.pertussis or N.gonorrhoeae. Its function is as follows. Among others, also active against C.jejuni and L.pneumophila but not against Y.enterocolitica. In terms of biological role, among others, also active against Y.enterocolitica butnot against L.pneumophila and C.jejuni. The sequence is that of Apidaecin 1+ from Pimpla disparis (Parasitic wasp).